The following is a 429-amino-acid chain: Adenylosuccinate synthetase (429 aa).

GTP contacts are provided by residues 13–19 and 41–43; these read GDEGKGK and GHT. Aspartate 14 serves as the catalytic Proton acceptor. Positions 14 and 41 each coordinate Mg(2+). IMP contacts are provided by residues 14–17, 39–42, threonine 130, arginine 144, glutamine 224, threonine 239, and arginine 303; these read DEGK and NAGH. Residue histidine 42 is the Proton donor of the active site. Position 299–305 (299–305) interacts with substrate; that stretch reads ATTGRAR. GTP-binding positions include arginine 305, 331-333, and 412-414; these read KLD and STG.

It belongs to the adenylosuccinate synthetase family. Homodimer. Mg(2+) serves as cofactor.

The protein localises to the cytoplasm. It catalyses the reaction IMP + L-aspartate + GTP = N(6)-(1,2-dicarboxyethyl)-AMP + GDP + phosphate + 2 H(+). It functions in the pathway purine metabolism; AMP biosynthesis via de novo pathway; AMP from IMP: step 1/2. Plays an important role in the de novo pathway of purine nucleotide biosynthesis. Catalyzes the first committed step in the biosynthesis of AMP from IMP. In Psychrobacter cryohalolentis (strain ATCC BAA-1226 / DSM 17306 / VKM B-2378 / K5), this protein is Adenylosuccinate synthetase.